Consider the following 244-residue polypeptide: CTD nuclear envelope phosphatase 1 (244 aa).

The helical transmembrane segment at 7-29 (LLGLRTFVAFAAKLWSFFIYLLR) threads the bilayer. The FCP1 homology domain maps to 57 to 224 (AQVKRKILVL…LNLLPMLDAL (168 aa)).

The protein belongs to the dullard family. As to quaternary structure, (Microbial infection) Interacts with Chandipura virus matrix protein. In terms of assembly, interacts with CNEP1R1; the complex dephosphorylates LPIN1 and LPIN2. Muscle specific with lower expression in other metabolic tissues.

The protein localises to the endoplasmic reticulum membrane. It is found in the nucleus membrane. The catalysed reaction is O-phospho-L-seryl-[protein] + H2O = L-seryl-[protein] + phosphate. It catalyses the reaction O-phospho-L-threonyl-[protein] + H2O = L-threonyl-[protein] + phosphate. In terms of biological role, serine/threonine protein phosphatase forming with CNEP1R1 an active phosphatase complex that dephosphorylates and may activate LPIN1 and LPIN2. LPIN1 and LPIN2 are phosphatidate phosphatases that catalyze the conversion of phosphatidic acid to diacylglycerol and control the metabolism of fatty acids at different levels. May indirectly modulate the lipid composition of nuclear and/or endoplasmic reticulum membranes and be required for proper nuclear membrane morphology and/or dynamics. May also indirectly regulate the production of lipid droplets and triacylglycerol. May antagonize BMP signaling. The chain is CTD nuclear envelope phosphatase 1 (CTDNEP1) from Homo sapiens (Human).